We begin with the raw amino-acid sequence, 470 residues long: MTASETIATAINQIDEKKEKLKKAFDDLQAHRSLLSPSFSLSWSEIDSHFSSLQSSLASRFRLLHSTSPLEHDSYRIDASDAGKSSSSEEVSEQPVVEPELRALCEKIDGIGLIKYLIRIWDDETPLNQEVSAAIRYSPDTASMVLDAIEGSNYTPSSSGRSFDVRRVFVLLMEVLIEINANITVDTRNRAKKLAYHWKSKVGVKPFEALVFLHLVAAFELGSEFDTEELSDYVFMIAKYKQATLVCNKIGVDRKRVGKLIKTLLDSGKPILAVKFMYECGMTDEFEPIPVLKSYIKDCREAALRVCVEDNYSLKSQNEASDKEVSALKPLIKIIKDQNLESEFTQEKVEERVEELEKNKALRKRNTTNPPKQEPQQKGKKRTRDCKNGSQVPVPSQQLLSRPEALLMPEHSHHGLQLNPYGLMTSAFSGVVVNPLTGLFGSGATPQSLYYAQQTGYVLPPQYHPPYYSQ.

Residues 336–369 are a coiled coil; that stretch reads KDQNLESEFTQEKVEERVEELEKNKALRKRNTTN. The interval 355-400 is disordered; sequence ELEKNKALRKRNTTNPPKQEPQQKGKKRTRDCKNGSQVPVPSQQLL. Residues 388-400 are compositionally biased toward polar residues; the sequence is NGSQVPVPSQQLL.

Belongs to the Frigida family. Component of the transcription activator complex FRI-C composed of FRI, FRL1, SUF4, FLX and FES1. Interacts with FRI and SUF4. As to expression, expressed during seed development and in dry seed. Preferentially expressed in the chalazal endosperm during early stages of seed development.

In terms of biological role, required for FRI-mediated up-regulation of FLC transcripts, but not redundant with FRI and only partially redundant with FRL2. Required for the stabilization of the FRI-C complex. This Arabidopsis thaliana (Mouse-ear cress) protein is FRIGIDA-like protein 1 (FRL1).